The chain runs to 601 residues: Aspartate--tRNA(Asp/Asn) ligase (601 aa).

Glutamate 187 provides a ligand contact to L-aspartate. An aspartate region spans residues glutamine 211–lysine 214. Positions 233 and 461 each coordinate L-aspartate. Arginine 233–glutamate 235 is a binding site for ATP. An ATP-binding site is contributed by glutamate 495. Residue arginine 502 coordinates L-aspartate. Glycine 547–arginine 550 is a binding site for ATP.

Belongs to the class-II aminoacyl-tRNA synthetase family. Type 1 subfamily. As to quaternary structure, homodimer.

Its subcellular location is the cytoplasm. The catalysed reaction is tRNA(Asx) + L-aspartate + ATP = L-aspartyl-tRNA(Asx) + AMP + diphosphate. Aspartyl-tRNA synthetase with relaxed tRNA specificity since it is able to aspartylate not only its cognate tRNA(Asp) but also tRNA(Asn). Reaction proceeds in two steps: L-aspartate is first activated by ATP to form Asp-AMP and then transferred to the acceptor end of tRNA(Asp/Asn). The protein is Aspartate--tRNA(Asp/Asn) ligase of Pelodictyon phaeoclathratiforme (strain DSM 5477 / BU-1).